Reading from the N-terminus, the 211-residue chain is N-(5'-phosphoribosyl)anthranilate isomerase (211 aa).

The protein belongs to the TrpF family.

It carries out the reaction N-(5-phospho-beta-D-ribosyl)anthranilate = 1-(2-carboxyphenylamino)-1-deoxy-D-ribulose 5-phosphate. It functions in the pathway amino-acid biosynthesis; L-tryptophan biosynthesis; L-tryptophan from chorismate: step 3/5. This Nitrosomonas europaea (strain ATCC 19718 / CIP 103999 / KCTC 2705 / NBRC 14298) protein is N-(5'-phosphoribosyl)anthranilate isomerase.